A 174-amino-acid chain; its full sequence is Actin-related protein 2/3 complex subunit 3 (174 aa).

Belongs to the ARPC3 family. Component of the Arp2/3 complex composed of arpB/Arp2, arpC/Arp3, arcA/p41-arc, arcB/p34-arc, arcC/p21-arc, arcD/p20-arc and arcE/p16-arc. Interacts with carmil (via the region between the LRR domain and COOH-terminal proline-rich domain); carmil is required for Arp2/3-dependent actin nucleation. Arp2/3 complex, MyoB, MyoC, and the alpha and beta subunits of capping protein all form a larger complex with carmil.

Its subcellular location is the cytoplasm. The protein resides in the cytoskeleton. It is found in the cytosol. The protein localises to the cell cortex. It localises to the cell projection. Its subcellular location is the pseudopodium. Its function is as follows. Functions as a component of the Arp2/3 complex which is involved in regulation of actin polymerization and together with an activating nucleation-promoting factor (NPF) mediates the formation of branched actin networks. Seems to contact the pointed end of the daughter actin filament. The Arp2/3 complex is involved in organizing the actin system in cell motility and chemotaxis, in phagocytosis and macropinocytosis, at late steps of endosome processing, and in mitosis. In concert with a group of other proteins, the Arp2/3 complex plays a general role in the rapid activation and adaptation of the actin system to its multiple functions. The sequence is that of Actin-related protein 2/3 complex subunit 3 (arcC) from Dictyostelium discoideum (Social amoeba).